A 199-amino-acid chain; its full sequence is Molybdenum cofactor guanylyltransferase (199 aa).

Residues 12–14 (LAG), lysine 25, asparagine 53, aspartate 71, and aspartate 101 contribute to the GTP site. Residue aspartate 101 participates in Mg(2+) binding.

Belongs to the MobA family. Monomer. The cofactor is Mg(2+).

The protein localises to the cytoplasm. The catalysed reaction is Mo-molybdopterin + GTP + H(+) = Mo-molybdopterin guanine dinucleotide + diphosphate. Transfers a GMP moiety from GTP to Mo-molybdopterin (Mo-MPT) cofactor (Moco or molybdenum cofactor) to form Mo-molybdopterin guanine dinucleotide (Mo-MGD) cofactor. The polypeptide is Molybdenum cofactor guanylyltransferase (Cupriavidus pinatubonensis (strain JMP 134 / LMG 1197) (Cupriavidus necator (strain JMP 134))).